The primary structure comprises 122 residues: NADH-quinone oxidoreductase subunit A (122 aa).

3 helical membrane passes run 10–30, 66–86, and 91–111; these read MIVG…LTLG, IFAL…PWAV, and LGLF…IGLA.

Belongs to the complex I subunit 3 family. In terms of assembly, NDH-1 is composed of 14 different subunits. Subunits NuoA, H, J, K, L, M, N constitute the membrane sector of the complex.

It is found in the cell membrane. It catalyses the reaction a quinone + NADH + 5 H(+)(in) = a quinol + NAD(+) + 4 H(+)(out). Its function is as follows. NDH-1 shuttles electrons from NADH, via FMN and iron-sulfur (Fe-S) centers, to quinones in the respiratory chain. The immediate electron acceptor for the enzyme in this species is believed to be a menaquinone. Couples the redox reaction to proton translocation (for every two electrons transferred, four hydrogen ions are translocated across the cytoplasmic membrane), and thus conserves the redox energy in a proton gradient. The polypeptide is NADH-quinone oxidoreductase subunit A (Bacillus cytotoxicus (strain DSM 22905 / CIP 110041 / 391-98 / NVH 391-98)).